Here is a 144-residue protein sequence, read N- to C-terminus: Small ribosomal subunit protein eS12z (144 aa).

An N-acetylserine modification is found at S2.

Belongs to the eukaryotic ribosomal protein eS12 family.

The protein is Small ribosomal subunit protein eS12z (RPS12A) of Arabidopsis thaliana (Mouse-ear cress).